The primary structure comprises 101 residues: NAD(P)H-quinone oxidoreductase subunit 4L, chloroplastic (101 aa).

A run of 3 helical transmembrane segments spans residues 2-22, 32-52, and 64-84; these read ILDS…YGLI, MSLE…SNFI, and IFIM…ILAI.

It belongs to the complex I subunit 4L family. In terms of assembly, NDH is composed of at least 16 different subunits, 5 of which are encoded in the nucleus.

It localises to the plastid. It is found in the chloroplast thylakoid membrane. It carries out the reaction a plastoquinone + NADH + (n+1) H(+)(in) = a plastoquinol + NAD(+) + n H(+)(out). It catalyses the reaction a plastoquinone + NADPH + (n+1) H(+)(in) = a plastoquinol + NADP(+) + n H(+)(out). In terms of biological role, NDH shuttles electrons from NAD(P)H:plastoquinone, via FMN and iron-sulfur (Fe-S) centers, to quinones in the photosynthetic chain and possibly in a chloroplast respiratory chain. The immediate electron acceptor for the enzyme in this species is believed to be plastoquinone. Couples the redox reaction to proton translocation, and thus conserves the redox energy in a proton gradient. This is NAD(P)H-quinone oxidoreductase subunit 4L, chloroplastic from Chlorokybus atmophyticus (Soil alga).